The following is a 745-amino-acid chain: Cysteine protease atg4 (745 aa).

3 stretches are compositionally biased toward low complexity: residues 29–42, 52–64, and 194–215; these read QQSY…APQQ, SPTS…SSST, and NNNS…NNNN. Disordered regions lie at residues 29–68 and 192–215; these read QQSY…AMGN and FQNN…NNNN. Residue Cys-262 is the Nucleophile of the active site. Disordered stretches follow at residues 344–363 and 439–480; these read LNRG…KEEE and QNNN…NGYN. A compositionally biased stretch (low complexity) spans 439 to 477; that stretch reads QNNNKNNNNNNPTTTTTTTTTATSSNNNNNQSPPSRVPN. Active-site residues include Asp-562 and His-564. The tract at residues 686–745 is disordered; that stretch reads HIPYNPNNNQNNNQNNNNNNNKNNNNNTNQQQTPNYPPKLNTYQPDFSSDGEIDDFTMVG. A compositionally biased stretch (low complexity) spans 688–719; that stretch reads PYNPNNNQNNNQNNNNNNNKNNNNNTNQQQTP. Over residues 734–745 the composition is skewed to acidic residues; it reads SDGEIDDFTMVG.

It belongs to the peptidase C54 family.

It is found in the cytoplasm. The enzyme catalyses [protein]-C-terminal L-amino acid-glycyl-phosphatidylethanolamide + H2O = [protein]-C-terminal L-amino acid-glycine + a 1,2-diacyl-sn-glycero-3-phosphoethanolamine. Its function is as follows. Cysteine protease that plays a key role in autophagy by mediating both proteolytic activation and delipidation of ATG8 family proteins. The protease activity is required for proteolytic activation of ATG8 family proteins: cleaves the C-terminal amino acid of ATG8 proteins to reveal a C-terminal glycine. Exposure of the glycine at the C-terminus is essential for ATG8 proteins conjugation to phosphatidylethanolamine (PE) and insertion to membranes, which is necessary for autophagy. In addition to the protease activity, also mediates delipidation of PE-conjugated ATG8 proteins. In Dictyostelium discoideum (Social amoeba), this protein is Cysteine protease atg4 (atg4-1).